Reading from the N-terminus, the 174-residue chain is Nucleoside diphosphate kinase (174 aa).

K14, F62, R90, T96, and R107 together coordinate ATP. The Pros-phosphohistidine intermediate role is filled by H123.

It belongs to the NDK family. Mg(2+) is required as a cofactor.

The protein localises to the cytoplasm. The catalysed reaction is a 2'-deoxyribonucleoside 5'-diphosphate + ATP = a 2'-deoxyribonucleoside 5'-triphosphate + ADP. It carries out the reaction a ribonucleoside 5'-diphosphate + ATP = a ribonucleoside 5'-triphosphate + ADP. In terms of biological role, major role in the synthesis of nucleoside triphosphates other than ATP. The ATP gamma phosphate is transferred to the NDP beta phosphate via a ping-pong mechanism, using a phosphorylated active-site intermediate. This Thermococcus kodakarensis (strain ATCC BAA-918 / JCM 12380 / KOD1) (Pyrococcus kodakaraensis (strain KOD1)) protein is Nucleoside diphosphate kinase.